The following is a 274-amino-acid chain: MAIKIYRPTSPGRRHHSVSSFEEITKSRPEKALLVSVKNDSGRNNQGRVTVRHRGGGSKTQIRVIDFKRNKLDVPGRIAAIEYDPNRTARIALVFYTDGEKRYILAPSDLKIGDVIMAGENAEPKSGNALPLSAIPTGTFIHNIELIKGRGGIMVRSAGAAAQLMAKEGDYALVRLPSGEMRKVRSDCSATVGQIGNIEHGTLEIGKAGRNRHLGWRPTVRGSAMSPNNHPHGGGECRSPIGMTGPKTPWGKPALGYRTRKAKYSDKLIVKRRG.

Disordered stretches follow at residues 1 to 23 (MAIK…SFEE) and 222 to 242 (GSAM…SPIG).

The protein belongs to the universal ribosomal protein uL2 family. Part of the 50S ribosomal subunit. Forms a bridge to the 30S subunit in the 70S ribosome.

Functionally, one of the primary rRNA binding proteins. Required for association of the 30S and 50S subunits to form the 70S ribosome, for tRNA binding and peptide bond formation. It has been suggested to have peptidyltransferase activity; this is somewhat controversial. Makes several contacts with the 16S rRNA in the 70S ribosome. This is Large ribosomal subunit protein uL2 from Dehalococcoides mccartyi (strain ATCC BAA-2266 / KCTC 15142 / 195) (Dehalococcoides ethenogenes (strain 195)).